A 225-amino-acid chain; its full sequence is RNA-binding protein 24-A (225 aa).

The RRM domain occupies 11 to 88 (TKIFVGGLPY…RKANVNLAYL (78 aa)).

The protein resides in the nucleus. The protein localises to the cytoplasm. In terms of biological role, multifunctional RNA-binding protein involved in the regulation of pre-mRNA splicing, mRNA stability and mRNA translation important for cell fate decision and differentiation. Plays a major role in pre-mRNA alternative splicing regulation. Mediates preferentially muscle-specific exon inclusion in numerous mRNAs important for striated cardiac and skeletal muscle cell differentiation. Binds to intronic splicing enhancer (ISE) composed of stretches of GU-rich motifs localized in flanking intron of exon that will be included by alternative splicing. Involved in embryonic stem cell (ESC) transition to cardiac cell differentiation by promoting pre-mRNA alternative splicing events of several pluripotency and/or differentiation genes. Plays a role in the regulation of mRNA stability and mRNA translation to which it is bound. Involved in myogenic differentiation by regulating myog levels. Binds to a huge amount of mRNAs. Required for embryonic heart development, sarcomer and M-band formation in striated muscles. This chain is RNA-binding protein 24-A (rbm24-a), found in Xenopus laevis (African clawed frog).